Reading from the N-terminus, the 554-residue chain is Glucose-6-phosphate isomerase (554 aa).

The Proton donor role is filled by glutamate 358. Active-site residues include histidine 389 and lysine 515.

Belongs to the GPI family.

It is found in the cytoplasm. It catalyses the reaction alpha-D-glucose 6-phosphate = beta-D-fructose 6-phosphate. The protein operates within carbohydrate biosynthesis; gluconeogenesis. It participates in carbohydrate degradation; glycolysis; D-glyceraldehyde 3-phosphate and glycerone phosphate from D-glucose: step 2/4. Its function is as follows. Catalyzes the reversible isomerization of glucose-6-phosphate to fructose-6-phosphate. The protein is Glucose-6-phosphate isomerase of Mycobacterium leprae (strain Br4923).